Here is a 255-residue protein sequence, read N- to C-terminus: tRNA (guanine-N(7)-)-methyltransferase (255 aa).

The disordered stretch occupies residues M1 to V35. Residues L13 to A23 are compositionally biased toward basic residues. S-adenosyl-L-methionine is bound by residues G75, E98–L99, N131–S132, and L151. The active site involves D154. Residue T229 to E231 coordinates S-adenosyl-L-methionine.

It belongs to the class I-like SAM-binding methyltransferase superfamily. TrmB family.

Its subcellular location is the nucleus. The catalysed reaction is guanosine(46) in tRNA + S-adenosyl-L-methionine = N(7)-methylguanosine(46) in tRNA + S-adenosyl-L-homocysteine. The protein operates within tRNA modification; N(7)-methylguanine-tRNA biosynthesis. Catalyzes the formation of N(7)-methylguanine at position 46 (m7G46) in tRNA. In Zea mays (Maize), this protein is tRNA (guanine-N(7)-)-methyltransferase.